The sequence spans 183 residues: UPF0200 protein MMP1282 (183 aa).

Gly8 to Ser15 provides a ligand contact to ATP.

The protein belongs to the UPF0200 family.

The chain is UPF0200 protein MMP1282 from Methanococcus maripaludis (strain DSM 14266 / JCM 13030 / NBRC 101832 / S2 / LL).